The primary structure comprises 222 residues: N-(5'-phosphoribosyl)anthranilate isomerase (222 aa).

It belongs to the TrpF family.

The enzyme catalyses N-(5-phospho-beta-D-ribosyl)anthranilate = 1-(2-carboxyphenylamino)-1-deoxy-D-ribulose 5-phosphate. It functions in the pathway amino-acid biosynthesis; L-tryptophan biosynthesis; L-tryptophan from chorismate: step 3/5. In Rhizobium johnstonii (strain DSM 114642 / LMG 32736 / 3841) (Rhizobium leguminosarum bv. viciae), this protein is N-(5'-phosphoribosyl)anthranilate isomerase.